The sequence spans 515 residues: G-protein coupled receptor 176 (515 aa).

A compositionally biased stretch (polar residues) spans M1–H16. Residues M1–G20 are disordered. Over M1–Q42 the chain is Extracellular. N-linked (GlcNAc...) asparagine glycosylation is found at N4, N11, N17, and N27. A helical transmembrane segment spans residues F43 to L63. Residues W64 to N82 are Cytoplasmic-facing. Residues L83–T103 traverse the membrane as a helical segment. The Extracellular segment spans residues S104–K118. A helical transmembrane segment spans residues V119–A139. At L140–R160 the chain is on the cytoplasmic side. The chain crosses the membrane as a helical span at residues E161–T181. Residues N182–L207 lie on the Extracellular side of the membrane. A helical membrane pass occupies residues V208–I228. Residues R229–T267 are Cytoplasmic-facing. A helical transmembrane segment spans residues L268–Y288. At Q289–V299 the chain is on the extracellular side. Residues F300–F320 form a helical membrane-spanning segment. Residues L321 to S515 lie on the Cytoplasmic side of the membrane.

This sequence belongs to the G-protein coupled receptor 1 family.

The protein resides in the cell membrane. Its function is as follows. Orphan receptor involved in normal circadian rhythm behavior. Acts through the G-protein subclass G(z)-alpha and has an agonist-independent basal activity to repress cAMP production. This chain is G-protein coupled receptor 176 (GPR176), found in Homo sapiens (Human).